Reading from the N-terminus, the 166-residue chain is UBA-like domain-containing protein 2-A (166 aa).

Residues 120–166 form a disordered region; sequence QQPVWLPPASPTTHLHHHHHHPQPVWPPNSQPTGGPQKAMAAMDGQR.

Belongs to the UBALD family.

The sequence is that of UBA-like domain-containing protein 2-A (ubald2-a) from Xenopus laevis (African clawed frog).